Reading from the N-terminus, the 317-residue chain is Pantothenate kinase (317 aa).

99–106 is a binding site for ATP; it reads GSVSVGKS.

Belongs to the prokaryotic pantothenate kinase family.

The protein resides in the cytoplasm. It carries out the reaction (R)-pantothenate + ATP = (R)-4'-phosphopantothenate + ADP + H(+). It functions in the pathway cofactor biosynthesis; coenzyme A biosynthesis; CoA from (R)-pantothenate: step 1/5. In Histophilus somni (strain 129Pt) (Haemophilus somnus), this protein is Pantothenate kinase.